The primary structure comprises 290 residues: 33 kDa chaperonin (290 aa).

2 disulfide bridges follow: Cys235/Cys237 and Cys268/Cys271.

This sequence belongs to the HSP33 family. In terms of processing, under oxidizing conditions two disulfide bonds are formed involving the reactive cysteines. Under reducing conditions zinc is bound to the reactive cysteines and the protein is inactive.

It is found in the cytoplasm. Functionally, redox regulated molecular chaperone. Protects both thermally unfolding and oxidatively damaged proteins from irreversible aggregation. Plays an important role in the bacterial defense system toward oxidative stress. This is 33 kDa chaperonin from Streptococcus uberis (strain ATCC BAA-854 / 0140J).